We begin with the raw amino-acid sequence, 944 residues long: Respiratory burst oxidase homolog protein F (944 aa).

Residues 2-387 lie on the Cytoplasmic side of the membrane; that stretch reads KPFSKNDRRR…VYIMQENWKR (386 aa). Coiled-coil stretches lie at residues 102 to 126 and 157 to 184; these read QFSQ…KRFS and LEAR…RGLR. EF-hand-like regions lie at residues 207–215 and 241–252; these read EKNGYIYRS and RRLKVEKINHDE. EF-hand domains are found at residues 264 to 299 and 308 to 343; these read SFDS…SASA and QAEE…KDTY. Positions 277, 279, 281, 283, 288, 321, and 327 each coordinate Ca(2+). 2 positions are modified to phosphoserine: Ser354 and Ser358. Residues 388 to 408 form a helical membrane-spanning segment; sequence IWVLSLWIMIMIGLFLWKFFQ. Over 409 to 475 the chain is Extracellular; that stretch reads YKQKDAFHVM…INFHKTIAGA (67 aa). Residues 426-583 form the Ferric oxidoreductase domain; sequence KGAAETLKFN…LFVIVYILLI (158 aa). A helical membrane pass occupies residues 476–492; sequence IVVAVILHIGDHLACDF. Residues 493 to 527 are Cytoplasmic-facing; sequence PRIVRATEYDYNRYLFHYFQTKQPTYFDLVKGPEG. The chain crosses the membrane as a helical span at residues 528–548; the sequence is ITGILMVILMIISFTLATRWF. At 549 to 570 the chain is on the extracellular side; that stretch reads RRNLVKLPKPFDRLTGFNAFWY. A helical transmembrane segment spans residues 571-591; sequence SHHLFVIVYILLILHGIFLYF. Topologically, residues 592–599 are cytoplasmic; the sequence is AKPWYVRT. The helical transmembrane segment at 600 to 617 threads the bilayer; it reads TWMYLAVPVLLYGGERTL. At 618 to 744 the chain is on the extracellular side; that stretch reads RYFRSGSYSV…PYGAPAQDYR (127 aa). Residues 622–742 form the FAD-binding FR-type domain; the sequence is SGSYSVRLLK…DGPYGAPAQD (121 aa). Residues 745 to 765 form a helical membrane-spanning segment; that stretch reads KYDVLLLVGLGIGATPFISIL. The Cytoplasmic portion of the chain corresponds to 766-944; it reads KDLLNNIVKM…TKFEFHKEHF (179 aa).

The protein belongs to the RBOH (TC 5.B.1.3) family. Monomer and homodimer. Interacts (via N-terminus) with CIPK26. Interacts (via N-terminus) with SRC2. Not glycosylated. Phosphorylated by CIPK26. In terms of tissue distribution, expressed in roots, stems, seedlings, inflorescences, leaves and guard cells.

It is found in the cell membrane. With respect to regulation, inhibited by diphenylene iodonium (DPI). In terms of biological role, calcium-dependent NADPH oxidase that generates superoxide. Generates reactive oxygen species (ROS) during incompatible interactions with pathogens and is important in the regulation of the hypersensitive response (HR). Involved in abscisic acid-induced stomatal closing and in UV-B and abscisic acid ROS-dependent signaling. The polypeptide is Respiratory burst oxidase homolog protein F (RBOHF) (Arabidopsis thaliana (Mouse-ear cress)).